The primary structure comprises 368 residues: 3-dehydroquinate synthase (368 aa).

NAD(+)-binding positions include 99-103 (GVVGD), 123-124 (TT), Lys136, and Lys145. Residues Glu178, His242, and His259 each coordinate Zn(2+).

This sequence belongs to the sugar phosphate cyclases superfamily. Dehydroquinate synthase family. It depends on NAD(+) as a cofactor. The cofactor is Co(2+). Requires Zn(2+) as cofactor.

The protein resides in the cytoplasm. It catalyses the reaction 7-phospho-2-dehydro-3-deoxy-D-arabino-heptonate = 3-dehydroquinate + phosphate. Its pathway is metabolic intermediate biosynthesis; chorismate biosynthesis; chorismate from D-erythrose 4-phosphate and phosphoenolpyruvate: step 2/7. Functionally, catalyzes the conversion of 3-deoxy-D-arabino-heptulosonate 7-phosphate (DAHP) to dehydroquinate (DHQ). The polypeptide is 3-dehydroquinate synthase (Chlorobaculum tepidum (strain ATCC 49652 / DSM 12025 / NBRC 103806 / TLS) (Chlorobium tepidum)).